A 992-amino-acid chain; its full sequence is Disks large-associated protein 4 (992 aa).

Residues 1–20 are compositionally biased toward basic and acidic residues; it reads MKGLGDSRPRHLSDSLDPPH. 2 disordered regions span residues 1 to 31 and 157 to 225; these read MKGLGDSRPRHLSDSLDPPHEPLFAGPDRNP and MEGT…PASG. Over residues 162–171 the composition is skewed to gly residues; it reads GKVGGNGSKK. A compositionally biased stretch (basic and acidic residues) spans 172 to 194; it reads GGLEDGKGRRAKSKERAKAGEPK. Positions 199–208 are enriched in polar residues; it reads SNISGWWSSD. S206 and S207 each carry phosphoserine. R290 is subject to Omega-N-methylarginine. The disordered stretch occupies residues 342–396; the sequence is TTLLSPRDMDSTAEGPIPCRRMRSGSYIKAMGDEDSDESGGGSPKPSPKTAARRQ. 7 positions are modified to phosphoserine: S377, S380, S384, S388, S405, S415, and S421. Disordered stretches follow at residues 527-751, 763-798, and 915-992; these read SVSL…GPRQ, SYGDNSDPALEASSLPPPDPWLETSSSSPAEPAQPG, and TPEK…QTRL. The segment covering 528–554 has biased composition (low complexity); that stretch reads VSLQSLSPPPSTGSLSNSRTLPSSSCL. Over residues 576-591 the composition is skewed to polar residues; it reads VTVQSSTESAQDTYLD. Phosphoserine occurs at positions 580, 581, 609, 611, 665, and 744. The segment covering 600-620 has biased composition (low complexity); sequence TSQSGLSNSSDSLDSSTRPPS. T915 bears the Phosphothreonine mark. 2 stretches are compositionally biased toward basic and acidic residues: residues 915 to 925 and 940 to 958; these read TPEKRKEEKKP and VSRDKASDAGDKQRQEARK. Polar residues predominate over residues 969–978; it reads VRQNSATESA. Phosphoserine is present on S973.

This sequence belongs to the SAPAP family. In terms of assembly, interacts with DLG1 and DLG4/PSD-95.

It is found in the membrane. Functionally, may play a role in the molecular organization of synapses and neuronal cell signaling. Could be an adapter protein linking ion channel to the subsynaptic cytoskeleton. May induce enrichment of PSD-95/SAP90 at the plasma membrane. This is Disks large-associated protein 4 (Dlgap4) from Mus musculus (Mouse).